The primary structure comprises 246 residues: Small ribosomal subunit protein uS3A (246 aa).

Positions Leu-21–Ala-92 constitute a KH type-2 domain. The disordered stretch occupies residues Asp-215–Ala-246.

It belongs to the universal ribosomal protein uS3 family.

It localises to the cytoplasm. The protein resides in the nucleus. The protein localises to the nucleolus. It is found in the mitochondrion inner membrane. Its subcellular location is the cytoskeleton. It localises to the spindle. The catalysed reaction is 2'-deoxyribonucleotide-(2'-deoxyribose 5'-phosphate)-2'-deoxyribonucleotide-DNA = a 3'-end 2'-deoxyribonucleotide-(2,3-dehydro-2,3-deoxyribose 5'-phosphate)-DNA + a 5'-end 5'-phospho-2'-deoxyribonucleoside-DNA + H(+). Its function is as follows. Component of the small ribosomal subunit. The ribosome is a large ribonucleoprotein complex responsible for the synthesis of proteins in the cell. Has endonuclease activity and plays a role in repair of damaged DNA. Also involved in other processes including regulation of transcription, translation of its cognate mRNA, spindle formation and chromosome movement during mitosis, and apoptosis. The protein is Small ribosomal subunit protein uS3A (rps3-a) of Xenopus laevis (African clawed frog).